We begin with the raw amino-acid sequence, 515 residues long: Transcription termination factor Rho (515 aa).

The region spanning 146–221 is the Rho RNA-BD domain; it reads DVLFTGVLDV…VKIKSINDQD (76 aa). ATP is bound by residues 264–269, 276–281, and Arg-307; these read GKGQRA and KAGKTT.

It belongs to the Rho family. As to quaternary structure, homohexamer. The homohexamer assembles into an open ring structure.

Facilitates transcription termination by a mechanism that involves Rho binding to the nascent RNA, activation of Rho's RNA-dependent ATPase activity, and release of the mRNA from the DNA template. The sequence is that of Transcription termination factor Rho from Borreliella burgdorferi (strain ATCC 35210 / DSM 4680 / CIP 102532 / B31) (Borrelia burgdorferi).